Reading from the N-terminus, the 155-residue chain is IFN signaling evasion protein OPG029 (155 aa).

The protein belongs to the orthopoxvirus OPG029 family. In terms of assembly, interacts with host TANK, TBKBP1 and AZI2; these interactions prevent interferon production. Interacts with host STAT2.

Its function is as follows. Prevents establishment of cellular antiviral state by blocking virus-induced phosphorylation and activation of interferon regulatory factors 3/IRF3 and 7/IRF7, transcription factors critical for the induction of interferons alpha and beta. This blockage is produced through the inhibition of host TBK1, by binding host TBK1 adapter proteins TBKBP1 and AZI2, thereby producing a strong inhibition of the phosphorylation and activation of IRF3 and IRF7. Also acts as an inhibitor of the cellular response to type I IFN by interacting with host STAT2. Mechanistically, exerts its inhibitory effect after host ISGF3 complex (composed of STAT1, STAT2 and IRF9) binding to the interferon stimulated response element (ISRE). The protein is IFN signaling evasion protein OPG029 (OPG019) of Cynomys gunnisoni (Gunnison's prairie dog).